The sequence spans 117 residues: Eukaryotic translation initiation factor 4E-binding protein 1 (117 aa).

Polar residues-rich tracts occupy residues 1 to 12 and 33 to 47; these read MSAGSSCSQTPS and YSTTPGGTLFSTTPG. Residues 1–47 form a disordered region; that stretch reads MSAGSSCSQTPSRAIPTRRVALGDGVQLPPGDYSTTPGGTLFSTTPG. Ser-2 carries the post-translational modification N-acetylserine. Phosphothreonine is present on residues Thr-36 and Thr-40. Position 43 is a phosphoserine (Ser-43). At Thr-45 the chain carries Phosphothreonine; by MTOR. Thr-49 is subject to Phosphothreonine. Tyr-53 bears the Phosphotyrosine mark. The YXXXXLphi motif signature appears at 53–59; the sequence is YDRKFLM. Lys-56 participates in a covalent cross-link: Glycyl lysine isopeptide (Lys-Gly) (interchain with G-Cter in ubiquitin). Ser-64 is modified (phosphoserine; by DYRK2, MAPK1, MAPK3 and MTOR). Residues 64–117 form a disordered region; the sequence is SPVAKTPPKDLPTIPGVTSPTSDEPPMQASQSHLHSSPEDKRAGGEESQFEMDI. A Phosphothreonine; by MTOR modification is found at Thr-69. Thr-76 carries the post-translational modification Phosphothreonine. The span at 79–98 shows a compositional bias: polar residues; sequence GVTSPTSDEPPMQASQSHLH. Phosphoserine occurs at positions 82, 95, and 99. Basic and acidic residues predominate over residues 99 to 108; it reads SSPEDKRAGG. At Ser-100 the chain carries Phosphoserine; by DYRK2. A Phosphoserine modification is found at Ser-111. Residues 113 to 117 carry the TOS motif motif; that stretch reads FEMDI.

The protein belongs to the eIF4E-binding protein family. In terms of assembly, hypophosphorylated EIF4EBP1 competes with EIF4G1/EIF4G3 to interact with EIF4E; insulin stimulated MAP-kinase (MAPK1 and MAPK3) or mTORC1 phosphorylation of EIF4EBP1 causes dissociation of the complex allowing EIF4G1/EIF4G3 to bind and consequent initiation of translation. Interacts (via TOS motif) with RPTOR; promoting phosphorylation by mTORC1. In terms of processing, phosphorylated on serine and threonine residues in response to insulin, EGF and PDGF. Phosphorylation at Thr-36, Thr-45, Ser-64 and Thr-69, corresponding to the hyperphosphorylated form, is regulated by mTORC1 and abolishes binding to EIF4E. Post-translationally, ubiquitinated: when eIF4E levels are low, hypophosphorylated form is ubiquitinated by the BCR(KLHL25) complex, leading to its degradation and serving as a homeostatic mechanism to maintain translation and prevent eIF4E inhibition when eIF4E levels are low. Not ubiquitinated when hyperphosphorylated (at Thr-36, Thr-45, Ser-64 and Thr-69) or associated with eIF4E. As to expression, expressed in all tissues examined; highest levels in fat and skeletal tissue, lowest levels in kidney.

It localises to the cytoplasm. The protein resides in the nucleus. Functionally, repressor of translation initiation that regulates EIF4E activity by preventing its assembly into the eIF4F complex: hypophosphorylated form competes with EIF4G1/EIF4G3 and strongly binds to EIF4E, leading to repress translation. In contrast, hyperphosphorylated form dissociates from EIF4E, allowing interaction between EIF4G1/EIF4G3 and EIF4E, leading to initiation of translation. Mediates the regulation of protein translation by hormones, growth factors and other stimuli that signal through the MAP kinase and mTORC1 pathways. The polypeptide is Eukaryotic translation initiation factor 4E-binding protein 1 (Eif4ebp1) (Rattus norvegicus (Rat)).